The following is an 80-amino-acid chain: Acyl carrier protein (80 aa).

The Carrier domain occupies 2 to 77; it reads SEINQKVVDI…QVVEYLEKRL (76 aa). Serine 37 bears the O-(pantetheine 4'-phosphoryl)serine mark.

The protein belongs to the acyl carrier protein (ACP) family. Post-translationally, 4'-phosphopantetheine is transferred from CoA to a specific serine of apo-ACP by AcpS. This modification is essential for activity because fatty acids are bound in thioester linkage to the sulfhydryl of the prosthetic group.

Its subcellular location is the cytoplasm. It participates in lipid metabolism; fatty acid biosynthesis. Its function is as follows. Carrier of the growing fatty acid chain in fatty acid biosynthesis. In Amoebophilus asiaticus (strain 5a2), this protein is Acyl carrier protein.